A 436-amino-acid polypeptide reads, in one-letter code: UPF0229 protein Meso_0256 (436 aa).

Positions 53-110 (PMPARGTSEPTFRPDRSSGERGYILPGNKEFAPGDRLPKPGASGGEGGTGAGRGGSDD) are disordered. Over residues 94-106 (ASGGEGGTGAGRG) the composition is skewed to gly residues.

The protein belongs to the UPF0229 family.

The polypeptide is UPF0229 protein Meso_0256 (Chelativorans sp. (strain BNC1)).